Reading from the N-terminus, the 308-residue chain is Cilia- and flagella-associated protein 73 (308 aa).

Coiled coils occupy residues 103–134 (RIQKEKEIEQLTEVLEELKSEKERILEVLEKN) and 164–227 (LSAT…QEAK).

The protein belongs to the CFAP73 family. Interacts with FAP100; form the modifier of inner arm (MIA) complex.

The protein localises to the cytoplasm. It localises to the cytoskeleton. The protein resides in the flagellum axoneme. As part of MIA, a complex associated with the outer doublet microtubules of the axoneme, may play a role in ciliary/flagellar motility by regulating the assembly and the activity of inner dynein arm. This is Cilia- and flagella-associated protein 73 from Chlamydomonas reinhardtii (Chlamydomonas smithii).